Here is a 290-residue protein sequence, read N- to C-terminus: Shikimate dehydrogenase (NADP(+)) (290 aa).

Shikimate-binding positions include serine 18 to serine 20 and threonine 66. The active-site Proton acceptor is the lysine 70. Shikimate is bound by residues asparagine 91 and aspartate 106. NADP(+) contacts are provided by residues glycine 130–alanine 134 and methionine 230. Residue tyrosine 232 participates in shikimate binding. An NADP(+)-binding site is contributed by glycine 253.

This sequence belongs to the shikimate dehydrogenase family. Homodimer.

The catalysed reaction is shikimate + NADP(+) = 3-dehydroshikimate + NADPH + H(+). The protein operates within metabolic intermediate biosynthesis; chorismate biosynthesis; chorismate from D-erythrose 4-phosphate and phosphoenolpyruvate: step 4/7. Functionally, involved in the biosynthesis of the chorismate, which leads to the biosynthesis of aromatic amino acids. Catalyzes the reversible NADPH linked reduction of 3-dehydroshikimate (DHSA) to yield shikimate (SA). This chain is Shikimate dehydrogenase (NADP(+)), found in Prosthecochloris aestuarii (strain DSM 271 / SK 413).